Here is a 110-residue protein sequence, read N- to C-terminus: Large ribosomal subunit protein uL22 (110 aa).

The protein belongs to the universal ribosomal protein uL22 family. As to quaternary structure, part of the 50S ribosomal subunit.

Its function is as follows. This protein binds specifically to 23S rRNA; its binding is stimulated by other ribosomal proteins, e.g. L4, L17, and L20. It is important during the early stages of 50S assembly. It makes multiple contacts with different domains of the 23S rRNA in the assembled 50S subunit and ribosome. Functionally, the globular domain of the protein is located near the polypeptide exit tunnel on the outside of the subunit, while an extended beta-hairpin is found that lines the wall of the exit tunnel in the center of the 70S ribosome. This chain is Large ribosomal subunit protein uL22, found in Nitrosomonas europaea (strain ATCC 19718 / CIP 103999 / KCTC 2705 / NBRC 14298).